Here is a 197-residue protein sequence, read N- to C-terminus: Protein RESISTANCE TO PHYTOPHTHORA 1, chloroplastic (197 aa).

The N-terminal 52 residues, 1-52 (MSWSLCSTHGVSSSIALTYGFRHRRRSTFRIFATSDGLEPKDDPPESPLPSS), are a transit peptide targeting the chloroplast. The interval 35–56 (SDGLEPKDDPPESPLPSSSSAL) is disordered. 4 helical membrane-spanning segments follow: residues 93 to 113 (FEVQGYASMFLGGVLSFNLLF), 120 to 140 (LWRLMGMWSIWMFTIPSLRAR), 150 to 170 (LNYLFLIVPLLNVAIPFFWKS), and 173 to 193 (LVWSADTVAFFAMYAWKLGWL).

Its subcellular location is the plastid. The protein localises to the chloroplast. It is found in the membrane. In terms of biological role, plays a positive role in the immune response to the oomycetes P.brassicae, including induced oxidative burst (e.g. H(2)O(2)) and enhanced expression of defense-related genes. In Arabidopsis thaliana (Mouse-ear cress), this protein is Protein RESISTANCE TO PHYTOPHTHORA 1, chloroplastic.